Consider the following 266-residue polypeptide: Large ribosomal subunit protein eL8 (266 aa).

A compositionally biased stretch (basic residues) spans 1–11 (MPKGKKAKGKK). The tract at residues 1-21 (MPKGKKAKGKKVAPAPSVAKK) is disordered.

This sequence belongs to the eukaryotic ribosomal protein eL8 family. In terms of assembly, component of the large ribosomal subunit.

It is found in the cytoplasm. Functionally, component of the large ribosomal subunit. The ribosome is a large ribonucleoprotein complex responsible for the synthesis of proteins in the cell. The protein is Large ribosomal subunit protein eL8 (rpl7a) of Ictalurus punctatus (Channel catfish).